The primary structure comprises 217 residues: Elongation factor Ts (217 aa).

Positions 82 to 85 (TDFV) are involved in Mg(2+) ion dislocation from EF-Tu.

The protein belongs to the EF-Ts family.

It localises to the cytoplasm. Functionally, associates with the EF-Tu.GDP complex and induces the exchange of GDP to GTP. It remains bound to the aminoacyl-tRNA.EF-Tu.GTP complex up to the GTP hydrolysis stage on the ribosome. In Synechococcus sp. (strain RCC307), this protein is Elongation factor Ts.